We begin with the raw amino-acid sequence, 647 residues long: Acetyl-coenzyme A synthetase (647 aa).

CoA-binding positions include 190–193, Thr-310, and Asn-334; that span reads RGGK. Residues 386-388, 410-415, Asp-499, and Arg-514 contribute to the ATP site; these read GEP and DTWWQT. Ser-522 provides a ligand contact to CoA. Arg-525 provides a ligand contact to ATP. Mg(2+)-binding residues include Val-536, His-538, and Val-541. Arg-583 contacts CoA. Position 608 is an N6-acetyllysine (Lys-608).

This sequence belongs to the ATP-dependent AMP-binding enzyme family. The cofactor is Mg(2+). In terms of processing, acetylated. Deacetylation by the SIR2-homolog deacetylase activates the enzyme.

The catalysed reaction is acetate + ATP + CoA = acetyl-CoA + AMP + diphosphate. Catalyzes the conversion of acetate into acetyl-CoA (AcCoA), an essential intermediate at the junction of anabolic and catabolic pathways. AcsA undergoes a two-step reaction. In the first half reaction, AcsA combines acetate with ATP to form acetyl-adenylate (AcAMP) intermediate. In the second half reaction, it can then transfer the acetyl group from AcAMP to the sulfhydryl group of CoA, forming the product AcCoA. The protein is Acetyl-coenzyme A synthetase of Xanthomonas campestris pv. campestris (strain 8004).